A 451-amino-acid polypeptide reads, in one-letter code: MREIVHIQIGQCGNQIGAKFWEVIGEEHGIDCAGSYCGTSALQLERISVYYNEAYGKKYVPRAVLVDLEPGTMDSIRSSRLGVLFQPDSFVHGNSGAGNNWAKGHYTEGAELIENVMDVVRRESESCDCLQGFQIVHSLGGGTGSGMGTLLMNKIREEYPDRILNSFSVMPSPKVSDTVVEPYNAVLSIHQLIENTDACFCIDNEALYDICFRTLRLTTPTYGDLNHLVSLTMSGITTSLRFPGQLNADLRKLAVNMVPFPRLHFFMPGFAPLTAQGSQQYRALSVAELTQQMFDARNIMAACDPRRGRYLTVACIFRGKMSTKEVDQQLLSIQTRNSNCFVEWIPNNVKVAVCDIPPRGLNMAATFLGNNTAIQELFTRVSEHFSAMFRRRAFVHWYTSEGMDISEFGEAESDIHDLVSEYQQFQDVRAGLEDSEEDVEEAEVEAEDKDH.

The short motif at 1–4 (MREI) is the MREI motif element. Positions 11, 69, 138, 142, 143, and 144 each coordinate GTP. Glu69 contacts Mg(2+). At Ser172 the chain carries Phosphoserine; by CDK1. Asn204 and Asn226 together coordinate GTP. Positions 430 to 451 (AGLEDSEEDVEEAEVEAEDKDH) are disordered. A compositionally biased stretch (acidic residues) spans 433–451 (EDSEEDVEEAEVEAEDKDH). Ser435 carries the phosphoserine modification. Residue Glu440 is modified to 5-glutamyl polyglutamate.

It belongs to the tubulin family. Dimer of alpha and beta chains. A typical microtubule is a hollow water-filled tube with an outer diameter of 25 nm and an inner diameter of 15 nM. Alpha-beta heterodimers associate head-to-tail to form protofilaments running lengthwise along the microtubule wall with the beta-tubulin subunit facing the microtubule plus end conferring a structural polarity. Microtubules usually have 13 protofilaments but different protofilament numbers can be found in some organisms and specialized cells. Interacts with RANBP10. Mg(2+) is required as a cofactor. In terms of processing, some glutamate residues at the C-terminus are polyglycylated, resulting in polyglycine chains on the gamma-carboxyl group. Glycylation is mainly limited to tubulin incorporated into axonemes (cilia and flagella) whereas glutamylation is prevalent in neuronal cells, centrioles, axonemes, and the mitotic spindle. Both modifications can coexist on the same protein on adjacent residues, and lowering polyglycylation levels increases polyglutamylation, and reciprocally. Cilia and flagella glycylation is required for their stability and maintenance. Flagella glycylation controls sperm motility. Some glutamate residues at the C-terminus are polyglutamylated, resulting in polyglutamate chains on the gamma-carboxyl group. Polyglutamylation plays a key role in microtubule severing by spastin (SPAST). SPAST preferentially recognizes and acts on microtubules decorated with short polyglutamate tails: severing activity by SPAST increases as the number of glutamates per tubulin rises from one to eight, but decreases beyond this glutamylation threshold. Glutamylation is also involved in cilia motility. Post-translationally, phosphorylated on Ser-172 by CDK1 during the cell cycle, from metaphase to telophase, but not in interphase. This phosphorylation inhibits tubulin incorporation into microtubules.

The protein resides in the cytoplasm. The protein localises to the cytoskeleton. Functionally, tubulin is the major constituent of microtubules, a cylinder consisting of laterally associated linear protofilaments composed of alpha- and beta-tubulin heterodimers. Microtubules grow by the addition of GTP-tubulin dimers to the microtubule end, where a stabilizing cap forms. Below the cap, tubulin dimers are in GDP-bound state, owing to GTPase activity of alpha-tubulin. The polypeptide is Tubulin beta-1 chain (Tubb1) (Mus musculus (Mouse)).